The chain runs to 1272 residues: Protein diaphanous homolog 1 (1272 aa).

Position 1 is an N-acetylmethionine (Met1). Gly residues predominate over residues 1-12; it reads MEPPGGSLGPGR. Residues 1–84 form a disordered region; that stretch reads MEPPGGSLGP…YGDDPTAQSL (84 aa). Phosphoserine occurs at positions 7, 22, and 36. Over residues 44-65 the composition is skewed to basic and acidic residues; the sequence is LMADELERFTSMRIKKEKEKPN. Residues 67 to 84 show a composition bias toward polar residues; the sequence is AHRNSSASYGDDPTAQSL. The GBD/FH3 domain occupies 84 to 449; the sequence is LQDVSDEQVL…QIVLHKNGAD (366 aa). Residues 468–572 are a coiled coil; it reads MIDKTKVEKS…ASLSAAAITV (105 aa). The interval 573–755 is disordered; it reads PPSVPSRAPV…GMPPPPPFGF (183 aa). 3 stretches are compositionally biased toward pro residues: residues 574–589, 596–622, and 640–658; these read PSVP…PPLP, IPPP…PPLP, and SPPP…PPLP. The FH1 domain maps to 583–764; that stretch reads PPAPPLPGDS…FGVPAAPVLP (182 aa). Positions 659–674 are enriched in low complexity; sequence EGVGIPSPSSLPGGTA. Over residues 675-753 the composition is skewed to pro residues; the sequence is IPPPPPLPGS…GMGMPPPPPF (79 aa). A Phosphothreonine modification is found at Thr768. Positions 769–1171 constitute an FH2 domain; sequence PKKLYKPEVQ…MRRAKLAKEK (403 aa). Residues 1039 to 1196 adopt a coiled-coil conformation; the sequence is DELAHVEKAS…IDMNAEGDET (158 aa). Lys1057 and Lys1103 each carry N6-acetyllysine. Tyr1121 bears the Phosphotyrosine mark. The region spanning 1194–1222 is the DAD domain; the sequence is DETGVMDSLLEALQSGAAFRRKRGPRQAN. Residues Ser1251 and Ser1254 each carry the phosphoserine modification.

It belongs to the formin homology family. Diaphanous subfamily. As to quaternary structure, homodimer. Interacts with the GTP-bound form of RHOA. Interacts with RHOC, PFY1, MAPRE1 and BAIAP2. Interacts with APC; acts as a scaffold protein for MAPRE1 and APC to stabilize microtubules and promote cell migration. Interacts with SCAI. Interacts with DCAF7, via FH2 domain. Interacts with NCDN. Interacts with OSBPL10, OSBPL2, VIM, TUBB and DYN1. In terms of processing, phosphorylation at Thr-768 is stimulated by cAMP and regulates stability, complex formation and mitochondrial movement. Expressed in brain, heart, placenta, lung, kidney, pancreas, liver, skeletal muscle and cochlea. Expressed in platelets.

The protein localises to the cell membrane. It localises to the cell projection. It is found in the ruffle membrane. Its subcellular location is the cytoplasm. The protein resides in the cytoskeleton. The protein localises to the microtubule organizing center. It localises to the centrosome. It is found in the spindle. Its subcellular location is the nucleus. Functionally, actin nucleation and elongation factor required for the assembly of F-actin structures, such as actin cables and stress fibers. Binds to the barbed end of the actin filament and slows down actin polymerization and depolymerization. Required for cytokinesis, and transcriptional activation of the serum response factor. DFR proteins couple Rho and Src tyrosine kinase during signaling and the regulation of actin dynamics. Functions as a scaffold protein for MAPRE1 and APC to stabilize microtubules and promote cell migration. Has neurite outgrowth promoting activity. Acts in a Rho-dependent manner to recruit PFY1 to the membrane. In hear cells, it may play a role in the regulation of actin polymerization in hair cells. The MEMO1-RHOA-DIAPH1 signaling pathway plays an important role in ERBB2-dependent stabilization of microtubules at the cell cortex. It controls the localization of APC and CLASP2 to the cell membrane, via the regulation of GSK3B activity. In turn, membrane-bound APC allows the localization of the MACF1 to the cell membrane, which is required for microtubule capture and stabilization. Plays a role in the regulation of cell morphology and cytoskeletal organization. Required in the control of cell shape. Plays a role in brain development. Also acts as an actin nucleation and elongation factor in the nucleus by promoting nuclear actin polymerization inside the nucleus to drive serum-dependent SRF-MRTFA activity. This chain is Protein diaphanous homolog 1 (DIAPH1), found in Homo sapiens (Human).